A 508-amino-acid polypeptide reads, in one-letter code: Maturase K (508 aa).

The protein belongs to the intron maturase 2 family. MatK subfamily.

It is found in the plastid. The protein localises to the chloroplast. Usually encoded in the trnK tRNA gene intron. Probably assists in splicing its own and other chloroplast group II introns. This is Maturase K from Wolffia arrhiza (Rootless water-meal).